A 172-amino-acid chain; its full sequence is UBA-like domain-containing protein 2 (172 aa).

The span at 118-130 (PPNQQPVWLPPSS) shows a compositional bias: pro residues. The disordered stretch occupies residues 118–172 (PPNQQPVWLPPSSPTGHHTLHHHHHHMHPPPSWPPVSQPANGPQTPVISALHGQR). Residues 135 to 145 (HTLHHHHHHMH) show a composition bias toward basic residues.

Belongs to the UBALD family.

This is UBA-like domain-containing protein 2 (ubald2) from Danio rerio (Zebrafish).